The primary structure comprises 245 residues: 1-(5-phosphoribosyl)-5-[(5-phosphoribosylamino)methylideneamino] imidazole-4-carboxamide isomerase (245 aa).

Catalysis depends on Asp-8, which acts as the Proton acceptor. Asp-130 serves as the catalytic Proton donor.

The protein belongs to the HisA/HisF family.

It localises to the cytoplasm. It carries out the reaction 1-(5-phospho-beta-D-ribosyl)-5-[(5-phospho-beta-D-ribosylamino)methylideneamino]imidazole-4-carboxamide = 5-[(5-phospho-1-deoxy-D-ribulos-1-ylimino)methylamino]-1-(5-phospho-beta-D-ribosyl)imidazole-4-carboxamide. The protein operates within amino-acid biosynthesis; L-histidine biosynthesis; L-histidine from 5-phospho-alpha-D-ribose 1-diphosphate: step 4/9. This chain is 1-(5-phosphoribosyl)-5-[(5-phosphoribosylamino)methylideneamino] imidazole-4-carboxamide isomerase, found in Ectopseudomonas mendocina (strain ymp) (Pseudomonas mendocina).